Reading from the N-terminus, the 559-residue chain is NXPE family member 2 (559 aa).

The helical transmembrane segment at 17-37 (AIARKLLLMLTFILIFWIIYL) threads the bilayer.

Belongs to the NXPE family.

The protein localises to the membrane. This chain is NXPE family member 2 (NXPE2), found in Homo sapiens (Human).